A 20-amino-acid chain; its full sequence is Putative serine protease (20 aa).

The protein belongs to the peptidase S1 family.

It is found in the secreted. In terms of biological role, binds the A.niger cell wall component alpha-1,3-glucan, a fungal pathogen-associated molecular pattern (PAMP) that activates the host immune response. The sequence is that of Putative serine protease from Galleria mellonella (Greater wax moth).